The sequence spans 326 residues: Probable major capsid protein gp17 (326 aa).

The protein belongs to the L5likevirus major capsid protein gp17 family. L5 head shells are composed of gp17 subunits that are extensively cross-linked.

Its subcellular location is the virion. The polypeptide is Probable major capsid protein gp17 (17) (Mycobacterium (Mycobacteriophage L5)).